The chain runs to 115 residues: Protein translation factor SUI1 homolog (115 aa).

This sequence belongs to the SUI1 family.

Its function is as follows. Probably involved in translation. The chain is Protein translation factor SUI1 homolog from Sporobolus stapfianus (Ressurection grass).